A 170-amino-acid chain; its full sequence is Alpha-crystallin A chain (170 aa).

M1 carries the post-translational modification N-acetylmethionine. A required for complex formation with BFSP1 and BFSP2 region spans residues 1-63 (MDVTIQHPWF…RTALDSGISE (63 aa)). A Deamidated glutamine; partial modification is found at Q6. S45 bears the Phosphoserine mark. At Q50 the chain carries Deamidated glutamine; partial. The sHSP domain occupies 52 to 161 (LFRTALDSGI…GERTIPVSRE (110 aa)). The residue at position 99 (K99) is an N6-acetyllysine. H100 is a binding site for Zn(2+). N101 carries the deamidated asparagine; partial modification. E102, H107, and H151 together coordinate Zn(2+). Residues 144-170 (PKLVDPSHGERTIPVSREEKPSSAPSS) are disordered. The span at 148-164 (DPSHGERTIPVSREEKP) shows a compositional bias: basic and acidic residues. S159 carries an O-linked (GlcNAc) serine glycan.

The protein belongs to the small heat shock protein (HSP20) family. As to quaternary structure, heteromer composed of three CRYAA and one CRYAB subunits. Inter-subunit bridging via zinc ions enhances stability, which is crucial as there is no protein turn over in the lens. Can also form homodimers and homotetramers (dimers of dimers) which serve as the building blocks of homooligomers. Within homooligomers, the zinc-binding motif is created from residues of 3 different molecules. His-100 and Glu-102 from one molecule are ligands of the zinc ion, and His-107 and His-151 residues from additional molecules complete the site with tetrahedral coordination geometry. Part of a complex required for lens intermediate filament formation composed of BFSP1, BFSP2 and CRYAA. Acetylation at Lys-99 may increase chaperone activity. In terms of processing, undergoes age-dependent proteolytical cleavage at the C-terminus.

The protein resides in the cytoplasm. Its subcellular location is the nucleus. Contributes to the transparency and refractive index of the lens. Acts as a chaperone, preventing aggregation of various proteins under a wide range of stress conditions. Required for the correct formation of lens intermediate filaments as part of a complex composed of BFSP1, BFSP2 and CRYAA. The protein is Alpha-crystallin A chain (CRYAA) of Tamandua mexicana (Northern Tamandua).